The sequence spans 282 residues: Probable protein phosphatase 2C 45 (282 aa).

A PPM-type phosphatase domain is found at 27–272 (SYGYASSPGK…DNITCVVVRF (246 aa)). Residues Asp-63, Gly-64, Asp-224, and Asp-263 each contribute to the Mn(2+) site.

Belongs to the PP2C family. The cofactor is Mg(2+). Mn(2+) serves as cofactor.

The enzyme catalyses O-phospho-L-seryl-[protein] + H2O = L-seryl-[protein] + phosphate. It catalyses the reaction O-phospho-L-threonyl-[protein] + H2O = L-threonyl-[protein] + phosphate. This chain is Probable protein phosphatase 2C 45, found in Oryza sativa subsp. japonica (Rice).